The chain runs to 145 residues: UPF0735 ACT domain-containing protein CPR_1404 (145 aa).

The 76-residue stretch at 69–144 (IFNMVVTHEK…GVEKVEFVAM (76 aa)) folds into the ACT domain.

Belongs to the UPF0735 family.

The chain is UPF0735 ACT domain-containing protein CPR_1404 from Clostridium perfringens (strain SM101 / Type A).